The primary structure comprises 366 residues: MDSYEYNELLKKLQTKVENIGSIVKPDDIKARLKEIEAIEQDPDFWQDIARAGALNKEKTKISNMLAKFSDANQAVSDAKELFELANSENDEETINSLFEDAKNLDEKIVNLEISMLLSGEDDGKNAIVSIHPGAGGTESNDWASMLYRMYLRFCEREGFKVETLDFQEGEEAGLKDVSFIVKGENAYGYFKAENGIHRLVRTSPFDSAGRRHTSFSSVMVSPEVDDDIEIEIEEKDLKIDTYRASGAGGQHVNKTESAIRITHIPTGIVVQCQNDRSQHKNRATAMKMLKSRLYELELMKQQEASNSVEKSEIGWGHQIRSYVLFPYQQVKDNRSGEAYSQTDAILDGDIKKMIEGVLIAQKAEA.

An N5-methylglutamine modification is found at Q251.

It belongs to the prokaryotic/mitochondrial release factor family. In terms of processing, methylated by PrmC. Methylation increases the termination efficiency of RF2.

The protein localises to the cytoplasm. Functionally, peptide chain release factor 2 directs the termination of translation in response to the peptide chain termination codons UGA and UAA. The polypeptide is Peptide chain release factor 2 (Campylobacter concisus (strain 13826)).